The primary structure comprises 510 residues: Serine/threonine-protein kinase RIO3 (510 aa).

2 disordered regions span residues 100 to 126 (GSSSSVHFTPDRYHPKTMQETDSENED) and 143 to 191 (DEEN…DMVG). Composition is skewed to basic and acidic residues over residues 108 to 118 (TPDRYHPKTMQ) and 162 to 179 (TKHDTGVSGRRNADKTFN). The 276-residue stretch at 235–510 (LLLLKWINQG…RGISPAREYN (276 aa)) folds into the Protein kinase domain. ATP is bound by residues 241–249 (INQGVFDSV) and K275. D388 functions as the Proton acceptor in the catalytic mechanism. The span at 474-499 (RSVDLRHDKSRPADMELKKYNEEKKA) shows a compositional bias: basic and acidic residues. The tract at residues 474 to 510 (RSVDLRHDKSRPADMELKKYNEEKKANRGISPAREYN) is disordered.

The protein belongs to the protein kinase superfamily. RIO-type Ser/Thr kinase family. Requires Mg(2+) as cofactor. As to expression, expressed in tail neurons (PVQ and PHAL/PQR).

The enzyme catalyses L-seryl-[protein] + ATP = O-phospho-L-seryl-[protein] + ADP + H(+). The catalysed reaction is L-threonyl-[protein] + ATP = O-phospho-L-threonyl-[protein] + ADP + H(+). The chain is Serine/threonine-protein kinase RIO3 (riok-3) from Caenorhabditis elegans.